A 145-amino-acid chain; its full sequence is Ribosome maturation factor RimP (145 aa).

This sequence belongs to the RimP family.

It is found in the cytoplasm. In terms of biological role, required for maturation of 30S ribosomal subunits. This Borreliella burgdorferi (strain ZS7) (Borrelia burgdorferi) protein is Ribosome maturation factor RimP.